Reading from the N-terminus, the 66-residue chain is Large ribosomal subunit protein bL33c (66 aa).

It belongs to the bacterial ribosomal protein bL33 family.

Its subcellular location is the plastid. It localises to the chloroplast. In Oenothera argillicola (Appalachian evening primrose), this protein is Large ribosomal subunit protein bL33c.